Here is a 154-residue protein sequence, read N- to C-terminus: SsrA-binding protein (154 aa).

This sequence belongs to the SmpB family.

It localises to the cytoplasm. Its function is as follows. Required for rescue of stalled ribosomes mediated by trans-translation. Binds to transfer-messenger RNA (tmRNA), required for stable association of tmRNA with ribosomes. tmRNA and SmpB together mimic tRNA shape, replacing the anticodon stem-loop with SmpB. tmRNA is encoded by the ssrA gene; the 2 termini fold to resemble tRNA(Ala) and it encodes a 'tag peptide', a short internal open reading frame. During trans-translation Ala-aminoacylated tmRNA acts like a tRNA, entering the A-site of stalled ribosomes, displacing the stalled mRNA. The ribosome then switches to translate the ORF on the tmRNA; the nascent peptide is terminated with the 'tag peptide' encoded by the tmRNA and targeted for degradation. The ribosome is freed to recommence translation, which seems to be the essential function of trans-translation. In Treponema pallidum (strain Nichols), this protein is SsrA-binding protein.